Consider the following 242-residue polypeptide: Host range factor p28 (242 aa).

In terms of domain architecture, KilA-N spans 21–131; the sequence is YIDEPNDIRL…QSILRGLVNW (111 aa). Residues 173–226 form an RING-type zinc finger; it reads CGICYEVVYSKRLENDRYFGLLDSCNHIFCITCINIWHRTRRETGASDNCPICR.

Belongs to the orthopoxvirus OPG021 family.

The protein localises to the host cytoplasm. The enzyme catalyses S-ubiquitinyl-[E2 ubiquitin-conjugating enzyme]-L-cysteine + [acceptor protein]-L-lysine = [E2 ubiquitin-conjugating enzyme]-L-cysteine + N(6)-ubiquitinyl-[acceptor protein]-L-lysine.. RING-finger E3 ubiquitin ligase which catalyzes the formation of both 'Lys-48'- and 'Lys-63'-linked polyubiquitin chains. Plays an important role in virulence by acting as an anti-apoptotic factor. This Cowpox virus (strain Brighton Red) (CPV) protein is Host range factor p28 (OPG021).